A 98-amino-acid chain; its full sequence is La1-like protein 13 (98 aa).

A signal peptide spans 1–24 (MERILKPVFLAILIVLSFSSQCMG). Residue lysine 97 is modified to Lysine amide.

Belongs to the scorpion La1-like peptide family. Contains 4 disulfide bonds. In terms of tissue distribution, expressed by the venom gland.

The protein resides in the secreted. The protein is La1-like protein 13 of Urodacus yaschenkoi (Inland robust scorpion).